A 158-amino-acid polypeptide reads, in one-letter code: Class 10 plant pathogenesis-related protein 2B (158 aa).

Position 8 (Asp8) interacts with trans-zeatin. Ca(2+) contacts are provided by Pro32, Val35, and Ile38. Residues Glu60, His69, Tyr81, and Tyr83 each contribute to the trans-zeatin site. A melatonin-binding site is contributed by Tyr83.

The protein belongs to the BetVI family.

The protein resides in the cytoplasm. The protein localises to the cytosol. Class II ribonuclease (RNase). Binds to several cytokinins including natural adenine-type (e.g. trans-zeatin and kinetin) and artificial urea-type (e.g. N,N'-diphenylurea and N-phenyl-N'-(2-chloro-4-pyridyl)urea) hormones. Interacts with melatonin. The polypeptide is Class 10 plant pathogenesis-related protein 2B (Lupinus luteus (European yellow lupine)).